The chain runs to 898 residues: Cilium assembly protein DZIP1 (898 aa).

Residues 14–66 form a disordered region; it reads DPPGTHSSAGIPSLLSSPQSQPSSGSQSRPAPSTMSGPLTSSGASTSIPPPFK. Over residues 25–46 the composition is skewed to low complexity; sequence PSLLSSPQSQPSSGSQSRPAPS. The segment covering 47 to 60 has biased composition (polar residues); sequence TMSGPLTSSGASTS. Positions 145-197 form a coiled coil; sequence LSISLQAAEERLLAEAREREQICVQLQKKTQDAKALKEELKQRKKIIASQQAM. A C2H2-type zinc finger spans residues 207-230; the sequence is HKCQHCEKAFMNASFLQSHMQRRH. Coiled-coil stretches lie at residues 242 to 353 and 407 to 447; these read NQKK…VQTQ and SAVS…ISSK. Residues 435–463 show a composition bias toward polar residues; the sequence is TSQNKQMKQISSKPPTITVQREGVSTPSP. 3 disordered regions span residues 435 to 509, 585 to 739, and 773 to 878; these read TSQN…SWQK, EQRV…WTDG, and KSLE…DAGT. Residues 495-505 are compositionally biased toward low complexity; it reads SSISESPTENR. The stretch at 573–590 forms a coiled coil; sequence YRRALKEISHKLEQRVKE. The segment covering 605–652 has biased composition (polar residues); that stretch reads VVQSRPRSSSFPSTVTRVMSGPASKQQRTPQPVPRSRTNVPHKTSTPL. The segment covering 662-684 has biased composition (acidic residues); the sequence is SDEDSSEEEEEEEEEEESSDEES. 2 stretches are compositionally biased toward polar residues: residues 685 to 715 and 723 to 734; these read PQMQ…QSVR and AEPTNVTTLSDS. Residues 797–815 show a composition bias toward basic and acidic residues; the sequence is KPTDVRNTRQNAKKELKYS. Positions 816–826 are enriched in acidic residues; sequence DDDDDDDDDWD. The span at 855–866 shows a compositional bias: polar residues; sequence DTSTSVWGSSTG.

Belongs to the DZIP C2H2-type zinc-finger protein family. As to expression, expressed throughout the embryo starting at 12 hours.

It localises to the cell projection. The protein localises to the cilium. It is found in the cytoplasm. The protein resides in the cytoskeleton. Its subcellular location is the cilium basal body. It localises to the microtubule organizing center. The protein localises to the centrosome. It is found in the centriole. The protein resides in the nucleus. Functionally, molecular adapter that recruits protein complexes required for cilium assembly and function to the cilium basal body. Required for establishment of left-right asymmetry during embryogenesis. Acts as a permissive factor that is required for the proper regulation of Hedgehog (Hh) target genes in response to Hh signals. Acts downstream of the Smoothened protein to modulate Gli activity in the somites of the developing embryo. This chain is Cilium assembly protein DZIP1 (dzip1), found in Danio rerio (Zebrafish).